We begin with the raw amino-acid sequence, 307 residues long: D-alanine--D-alanine ligase (307 aa).

One can recognise an ATP-grasp domain in the interval arginine 104–glutamate 301. Residue proline 130 to threonine 183 participates in ATP binding. Mg(2+) is bound by residues aspartate 251, glutamate 268, and asparagine 270.

It belongs to the D-alanine--D-alanine ligase family. The cofactor is Mg(2+). Mn(2+) serves as cofactor.

The protein resides in the cytoplasm. It carries out the reaction 2 D-alanine + ATP = D-alanyl-D-alanine + ADP + phosphate + H(+). The protein operates within cell wall biogenesis; peptidoglycan biosynthesis. Functionally, cell wall formation. The sequence is that of D-alanine--D-alanine ligase from Granulibacter bethesdensis (strain ATCC BAA-1260 / CGDNIH1).